The chain runs to 311 residues: Malate dehydrogenase (311 aa).

NAD(+)-binding positions include 7–13 (GAAGGIG) and Asp-34. Residues Arg-81 and Arg-87 each coordinate substrate. NAD(+)-binding positions include Asn-94 and 117-119 (ITN). Substrate-binding residues include Asn-119 and Arg-153. His-177 serves as the catalytic Proton acceptor. Met-227 serves as a coordination point for NAD(+).

It belongs to the LDH/MDH superfamily. MDH type 1 family. As to quaternary structure, homodimer.

The enzyme catalyses (S)-malate + NAD(+) = oxaloacetate + NADH + H(+). Catalyzes the reversible oxidation of malate to oxaloacetate. This chain is Malate dehydrogenase, found in Shewanella denitrificans (strain OS217 / ATCC BAA-1090 / DSM 15013).